The primary structure comprises 785 residues: Ubiquitin carboxyl-terminal hydrolase 10 (785 aa).

2 stretches are compositionally biased toward polar residues: residues 113-122 and 262-277; these read LTLDSGSNAE and DTTE…TLES. Disordered stretches follow at residues 113 to 145 and 262 to 314; these read LTLD…PPGY and DTTE…ATAT. Basic and acidic residues predominate over residues 290-304; it reads HTVESTDSDQAKPEE. The span at 305–314 shows a compositional bias: low complexity; the sequence is ASPTTEATAT. Residues 401 to 782 enclose the USP domain; the sequence is RGLINKGNWC…TAYLLYYRRV (382 aa). Cys-410 serves as the catalytic Nucleophile. Positions 537 to 581 are disordered; the sequence is EKLSVSNGPEVQTVREEEEQDEQGEGSEDEWEQVGPRNKSSVTRQ. The segment covering 552-568 has biased composition (acidic residues); the sequence is EEEEQDEQGEGSEDEWE. The active-site Proton acceptor is His-736.

Belongs to the peptidase C19 family. USP10 subfamily.

It localises to the cytoplasm. It is found in the nucleus. It carries out the reaction Thiol-dependent hydrolysis of ester, thioester, amide, peptide and isopeptide bonds formed by the C-terminal Gly of ubiquitin (a 76-residue protein attached to proteins as an intracellular targeting signal).. Hydrolase that can remove conjugated ubiquitin from target proteins such as p53/TP53, RPS2/us5, RPS3/us3, RPS10/eS10, BECN1, SNX3 and CFTR. Acts as an essential regulator of p53/TP53 stability: in unstressed cells, specifically deubiquitinates p53/TP53 in the cytoplasm, leading to counteracts MDM2 action and stabilize p53/TP53. Following DNA damage, translocates to the nucleus and deubiquitinates p53/TP53, leading to regulate the p53/TP53-dependent DNA damage response. Component of a regulatory loop that controls autophagy and p53/TP53 levels. Plays a key role in 40S ribosome subunit recycling when a ribosome has stalled during translation: acts both by inhibiting formation of stress granules, which store stalled translation pre-initiation complexes, and mediating deubiquitination of 40S ribosome subunits. Deubiquitinates CFTR in early endosomes, enhancing its endocytic recycling. The polypeptide is Ubiquitin carboxyl-terminal hydrolase 10 (USP10) (Gallus gallus (Chicken)).